We begin with the raw amino-acid sequence, 281 residues long: ATP synthase gamma chain (281 aa).

Belongs to the ATPase gamma chain family. In terms of assembly, F-type ATPases have 2 components, CF(1) - the catalytic core - and CF(0) - the membrane proton channel. CF(1) has five subunits: alpha(3), beta(3), gamma(1), delta(1), epsilon(1). CF(0) has three main subunits: a, b and c.

It localises to the cell membrane. Its function is as follows. Produces ATP from ADP in the presence of a proton gradient across the membrane. The gamma chain is believed to be important in regulating ATPase activity and the flow of protons through the CF(0) complex. This is ATP synthase gamma chain from Mesoplasma florum (strain ATCC 33453 / NBRC 100688 / NCTC 11704 / L1) (Acholeplasma florum).